The following is a 496-amino-acid chain: Cytochrome P450 71B1 (496 aa).

Cysteine 436 is a heme binding site.

Belongs to the cytochrome P450 family. The cofactor is heme.

In Thlaspi arvense (Field penny-cress), this protein is Cytochrome P450 71B1 (CYP71B1).